We begin with the raw amino-acid sequence, 968 residues long: A disintegrin and metalloproteinase with thrombospondin motifs 1 (968 aa).

Disordered regions lie at residues 1-23 (MQPK…DVQR) and 177-253 (APAV…RKKR). Positions 1–48 (MQPKVPLGSRKQKPCSDMGDVQRAARSRGSLSAHMLLLLLASITMLLC) are cleaved as a signal peptide. The propeptide occupies 49–253 (ARGAHGRPTE…SGPGSIRKKR (205 aa)). Positions 204 to 211 (AKCGVMDD) match the Cysteine switch motif. Residue Cys-206 coordinates Zn(2+). Residues 214–229 (LPTSDSRPESQNTRNQ) are compositionally biased toward polar residues. The Peptidase M12B domain maps to 259–468 (RYVETMLVAD…GHGECLMDKP (210 aa)). Glu-262, Asp-345, and Asp-352 together coordinate Ca(2+). Disulfide bonds link Cys-334–Cys-386, Cys-363–Cys-368, Cys-380–Cys-463, and Cys-418–Cys-447. His-402 contributes to the Zn(2+) binding site. The active site involves Glu-403. Residues His-406 and His-412 each contribute to the Zn(2+) site. Cys-463 and Asp-466 together coordinate Ca(2+). Residues 477 to 559 (DLPGTLYDAN…TDMKHFATPV (83 aa)) enclose the Disintegrin domain. 4 disulfides stabilise this stretch: Cys-489–Cys-512, Cys-500–Cys-522, Cys-507–Cys-541, and Cys-535–Cys-546. An N-linked (GlcNAc...) asparagine glycan is attached at Asn-548. Residues 560–615 (HGSWGPWGPWGDCSRTCGGGVQYTMRECDNPVPKNGGKYCEGKRVRYRSCNIEDCP) enclose the TSP type-1 1 domain. Cystine bridges form between Cys-572–Cys-609, Cys-576–Cys-614, and Cys-587–Cys-599. N-linked (GlcNAc...) asparagine glycosylation is found at Asn-721, Asn-765, and Asn-783. Residues 726–850 (KKMSGIVTST…YFMKKKTESF (125 aa)) are spacer. 2 consecutive TSP type-1 domains span residues 855-911 (TFSE…LPCP) and 912-968 (HWQV…TQCS). A glycan (N-linked (GlcNAc...) asparagine) is linked at Asn-946.

Zn(2+) serves as cofactor. Post-translationally, the precursor is cleaved by a furin endopeptidase. In terms of processing, glycosylated. Can be O-fucosylated by POFUT2 on a serine or a threonine residue found within the consensus sequence C1-X(2)-(S/T)-C2-G of the TSP type-1 repeat domains where C1 and C2 are the first and second cysteine residue of the repeat, respectively. Fucosylated repeats can then be further glycosylated by the addition of a beta-1,3-glucose residue by the glucosyltransferase, B3GALTL. Fucosylation mediates the efficient secretion of ADAMTS family members. Can also be C-glycosylated with one or two mannose molecules on tryptophan residues within the consensus sequence W-X-X-W of the TPRs, and N-glycosylated. These other glycosylations can also facilitate secretion.

Its subcellular location is the secreted. The protein resides in the extracellular space. The protein localises to the extracellular matrix. Metalloprotease which cleaves aggrecan, a cartilage proteoglycan, at the '1691-Glu-|-Leu-1692' site (within the chondroitin sulfate attachment domain), and may be involved in its turnover. Also cleaves COMP. Has angiogenic inhibitor activity. May play a critical role in follicular rupture. This Mus musculus (Mouse) protein is A disintegrin and metalloproteinase with thrombospondin motifs 1 (Adamts1).